Consider the following 214-residue polypeptide: MRVRNRPGAAEYMAKYPQYVVEGPEKWQGKWQERFGNNHPIHIEIGSGKGRFIYEMAKAHPEINYIGIDMQLSILSIALDKLVADPLPNLQLLRVDGEALTEYFAENEVDLIYLNFSDPWPKKKHEKRRLTYKNFLATDEIILKPNGEIHFKTDNQGLFEYSLSSFSKYGMIIERVWLDLHNSEFEGNIMTEYEEKFSSRGQRIYRVEARFVAK.

Positions 44, 69, 96, and 118 each coordinate S-adenosyl-L-methionine. Residue aspartate 118 is part of the active site. Lysine 122 lines the substrate pocket. The interaction with RNA stretch occupies residues 124–129; that stretch reads KHEKRR. Substrate is bound by residues aspartate 154 and 191–194; that span reads TEYE.

Belongs to the class I-like SAM-binding methyltransferase superfamily. TrmB family.

It carries out the reaction guanosine(46) in tRNA + S-adenosyl-L-methionine = N(7)-methylguanosine(46) in tRNA + S-adenosyl-L-homocysteine. The protein operates within tRNA modification; N(7)-methylguanine-tRNA biosynthesis. Functionally, catalyzes the formation of N(7)-methylguanine at position 46 (m7G46) in tRNA. This chain is tRNA (guanine-N(7)-)-methyltransferase, found in Enterococcus faecalis (strain ATCC 700802 / V583).